The chain runs to 195 residues: dTDP-4-dehydrorhamnose 3,5-epimerase (195 aa).

Residues Arg-31, Glu-36, 54-56 (QDN), and Arg-67 contribute to the substrate site. Residue His-70 is the Proton acceptor of the active site. Substrate-binding residues include Lys-80 and His-127. Tyr-140 acts as the Proton donor in catalysis. Substrate contacts are provided by Asp-151 and Lys-176.

Belongs to the dTDP-4-dehydrorhamnose 3,5-epimerase family. In terms of assembly, homodimer.

The catalysed reaction is dTDP-4-dehydro-6-deoxy-alpha-D-glucose = dTDP-4-dehydro-beta-L-rhamnose. It functions in the pathway carbohydrate biosynthesis; dTDP-L-rhamnose biosynthesis. Functionally, catalyzes the epimerization of the C3' and C5'positions of dTDP-6-deoxy-D-xylo-4-hexulose, forming dTDP-6-deoxy-L-lyxo-4-hexulose. The sequence is that of dTDP-4-dehydrorhamnose 3,5-epimerase from Sinorhizobium fredii (strain NBRC 101917 / NGR234).